A 542-amino-acid chain; its full sequence is CTP synthase (542 aa).

The segment at M1–L265 is amidoligase domain. Position 13 (S13) interacts with CTP. Residue S13 coordinates UTP. ATP-binding positions include S14–I19 and D71. Mg(2+)-binding residues include D71 and E139. CTP is bound by residues D146 to E148, K186 to Q191, and K222. UTP is bound by residues K186–Q191 and K222. A Glutamine amidotransferase type-1 domain is found at T290–K541. Position 351 (G351) interacts with L-glutamine. The active-site Nucleophile; for glutamine hydrolysis is the C378. L-glutamine-binding positions include L379 to Q382, E402, and R469. Active-site residues include H514 and E516.

Belongs to the CTP synthase family. In terms of assembly, homotetramer.

It catalyses the reaction UTP + L-glutamine + ATP + H2O = CTP + L-glutamate + ADP + phosphate + 2 H(+). The catalysed reaction is L-glutamine + H2O = L-glutamate + NH4(+). It carries out the reaction UTP + NH4(+) + ATP = CTP + ADP + phosphate + 2 H(+). The protein operates within pyrimidine metabolism; CTP biosynthesis via de novo pathway; CTP from UDP: step 2/2. With respect to regulation, allosterically activated by GTP, when glutamine is the substrate; GTP has no effect on the reaction when ammonia is the substrate. The allosteric effector GTP functions by stabilizing the protein conformation that binds the tetrahedral intermediate(s) formed during glutamine hydrolysis. Inhibited by the product CTP, via allosteric rather than competitive inhibition. Its function is as follows. Catalyzes the ATP-dependent amination of UTP to CTP with either L-glutamine or ammonia as the source of nitrogen. Regulates intracellular CTP levels through interactions with the four ribonucleotide triphosphates. The protein is CTP synthase of Pseudomonas entomophila (strain L48).